The following is a 425-amino-acid chain: L-cysteine:1D-myo-inositol 2-amino-2-deoxy-alpha-D-glucopyranoside ligase (425 aa).

Cys-43 contacts Zn(2+). L-cysteinyl-5'-AMP-binding positions include 43–46 (CGIT), Thr-58, and 81–83 (NVT). The short motif at 45 to 55 (ITPYDATHIGH) is the 'HIGH' region element. Positions 195 to 200 (ERGGDP) match the 'ERGGDP' region motif. Trp-236 provides a ligand contact to L-cysteinyl-5'-AMP. Residue Cys-240 participates in Zn(2+) binding. 258-260 (GSD) lines the L-cysteinyl-5'-AMP pocket. Zn(2+) is bound at residue His-265. Residue Val-295 participates in L-cysteinyl-5'-AMP binding. The short motif at 301–305 (KMSKS) is the 'KMSKS' region element.

Belongs to the class-I aminoacyl-tRNA synthetase family. MshC subfamily. In terms of assembly, monomer. The cofactor is Zn(2+).

It catalyses the reaction 1D-myo-inositol 2-amino-2-deoxy-alpha-D-glucopyranoside + L-cysteine + ATP = 1D-myo-inositol 2-(L-cysteinylamino)-2-deoxy-alpha-D-glucopyranoside + AMP + diphosphate + H(+). In terms of biological role, catalyzes the ATP-dependent condensation of GlcN-Ins and L-cysteine to form L-Cys-GlcN-Ins. This is L-cysteine:1D-myo-inositol 2-amino-2-deoxy-alpha-D-glucopyranoside ligase from Sanguibacter keddieii (strain ATCC 51767 / DSM 10542 / NCFB 3025 / ST-74).